We begin with the raw amino-acid sequence, 901 residues long: Protein SOK1 (901 aa).

Disordered stretches follow at residues 1–87 (MDQP…QNII), 106–139 (RSSG…SDLK), and 162–231 (NDDN…NASN). Residues 10–51 (PTTASNPAPSSTNSSSAPSATNSKQERSSSSLSKPSSVVPSK) show a composition bias toward low complexity. Phosphoserine is present on residues Ser-40 and Ser-53. Composition is skewed to polar residues over residues 74 to 87 (GDTS…QNII) and 106 to 115 (RSSGVITPSM). Over residues 116–138 (SLNASTNATNNDSSGNSANSSDL) the composition is skewed to low complexity. A phosphoserine mark is found at Ser-191 and Ser-193. Residues 220–231 (AAQQQPPGNASN) are compositionally biased toward polar residues. The residue at position 245 (Ser-245) is a Phosphoserine.

This sequence belongs to the TCP11 family.

It is found in the nucleus. In terms of biological role, high copy suppressor of a cyclic AMP-dependent protein kinase mutant. The polypeptide is Protein SOK1 (SOK1) (Saccharomyces cerevisiae (strain ATCC 204508 / S288c) (Baker's yeast)).